The sequence spans 227 residues: 2,3-bisphosphoglycerate-dependent phosphoglycerate mutase (227 aa).

Residues 7–14 (RHGLSEWN), 20–21 (TG), R59, 86–89 (ERHY), K97, 113–114 (RR), and 182–183 (GN) each bind substrate. H8 acts as the Tele-phosphohistidine intermediate in catalysis. The Proton donor/acceptor role is filled by E86.

The protein belongs to the phosphoglycerate mutase family. BPG-dependent PGAM subfamily. In terms of assembly, homodimer.

It catalyses the reaction (2R)-2-phosphoglycerate = (2R)-3-phosphoglycerate. The protein operates within carbohydrate degradation; glycolysis; pyruvate from D-glyceraldehyde 3-phosphate: step 3/5. Its function is as follows. Catalyzes the interconversion of 2-phosphoglycerate and 3-phosphoglycerate. This is 2,3-bisphosphoglycerate-dependent phosphoglycerate mutase from Mannheimia succiniciproducens (strain KCTC 0769BP / MBEL55E).